The chain runs to 377 residues: uncharacterized protein (377 aa).

The disordered stretch occupies residues 1 to 25 (MAQQTNVAGQKTEKQRKAPFRADHV). Residues 11–24 (KTEKQRKAPFRADH) are compositionally biased toward basic and acidic residues.

The protein to B.subtilis YxjG.

This is an uncharacterized protein from Bacillus subtilis (strain 168).